The chain runs to 328 residues: Dof zinc finger protein PBF (328 aa).

Residues 33-56 (RDPKQTRAMPQIGGSGERKPRPQL) are disordered. Residues 60–114 (LKCPRCDSNNTKFCYYNNYSMSQPRYFCKACRRYWTHGGTLRNVPIGGGCRKNKH) form a Dof-type zinc finger. 4 residues coordinate Zn(2+): cysteine 62, cysteine 65, cysteine 87, and cysteine 90. 2 disordered regions span residues 124-144 (TSSSSSATYAPLSPSTNASSS) and 306-328 (WNKHNNNNNNNNNNNNNNNNKGQ).

In terms of assembly, interacts with the bZIP transcription factor Opaque-2/O2. As to expression, seed endosperm.

The protein localises to the nucleus. In terms of biological role, transcription factor that binds specifically to a 5'-AA[AG]G-3' consensus core sequence. May enhance the DNA binding of the bZIP transcription factor Opaque-2 to O2 binding site elements. This is Dof zinc finger protein PBF (PBF) from Zea mays (Maize).